Consider the following 198-residue polypeptide: Phosphoheptose isomerase (198 aa).

Residues 36–198 (MARALGADRK…DRTLFGGPGG (163 aa)) form the SIS domain. 51 to 53 (NGG) is a binding site for substrate. Zn(2+)-binding residues include His-60 and Glu-64. Substrate contacts are provided by residues Glu-64, 93–94 (ND), 119–121 (STS), Ser-124, and Gln-174. Zn(2+) contacts are provided by Gln-174 and His-182.

The protein belongs to the SIS family. GmhA subfamily. In terms of assembly, homotetramer. It depends on Zn(2+) as a cofactor.

It is found in the cytoplasm. The enzyme catalyses 2 D-sedoheptulose 7-phosphate = D-glycero-alpha-D-manno-heptose 7-phosphate + D-glycero-beta-D-manno-heptose 7-phosphate. It participates in carbohydrate biosynthesis; D-glycero-D-manno-heptose 7-phosphate biosynthesis; D-glycero-alpha-D-manno-heptose 7-phosphate and D-glycero-beta-D-manno-heptose 7-phosphate from sedoheptulose 7-phosphate: step 1/1. Catalyzes the isomerization of sedoheptulose 7-phosphate in D-glycero-D-manno-heptose 7-phosphate. This Halorhodospira halophila (strain DSM 244 / SL1) (Ectothiorhodospira halophila (strain DSM 244 / SL1)) protein is Phosphoheptose isomerase.